The following is a 170-amino-acid chain: dCTP pyrophosphatase 1 (170 aa).

The tract at residues 1 to 25 (MSTAGDGERGTVGQEDSAAARPFRF) is disordered. Ser2 carries the N-acetylserine modification. Ser2 carries the phosphoserine modification. Substrate is bound by residues His38 and 47–51 (WEQFH). 2 residues coordinate Mg(2+): Glu63 and Glu66. Position 73 (Trp73) interacts with substrate. The Mg(2+) site is built by Glu95 and Asp98. A substrate-binding site is contributed by Tyr102. The interval 150–170 (SENQAVGAGDPASELRDQAST) is disordered.

As to quaternary structure, homotetramer. Mg(2+) serves as cofactor. As to expression, ubiquitous. Highly expressed in heart, liver, skeletal muscle, cerebellum, brain, and salivary gland.

The protein localises to the cytoplasm. The protein resides in the cytosol. The enzyme catalyses dCTP + H2O = dCMP + diphosphate + H(+). Inhibited by divalent calcium or cadmium ions. Its function is as follows. Hydrolyzes deoxynucleoside triphosphates (dNTPs) to the corresponding nucleoside monophosphates. Has a strong preference for dCTP and its analogs including 5-iodo-dCTP and 5-methyl-dCTP for which it may even have a higher efficiency. May protect DNA or RNA against the incorporation of these genotoxic nucleotide analogs through their catabolism. The chain is dCTP pyrophosphatase 1 from Mus musculus (Mouse).